The primary structure comprises 305 residues: Putative monooxygenase p33MONOX (305 aa).

2 disordered regions span residues 1–20 (MASR…LGKM) and 37–56 (LEDP…VPWK). Residue T44 is modified to Phosphothreonine. Residues 67 to 77 (LAKVEEGEASL) carry the Flavin-containing monooxygenase motif motif. A disordered region spans residues 159–305 (SGEITKEERQ…DLNVLTPTGF (147 aa)). Positions 169–183 (PASAQSTPSTTPHSS) are enriched in low complexity. Phosphothreonine is present on T175. 2 positions are modified to phosphoserine: S182 and S183. Composition is skewed to polar residues over residues 191 to 210 (WFTS…TMDS) and 233 to 243 (KYDSGSSTTQA).

It belongs to the P33MONOX family. As to quaternary structure, interacts with NELFB, NOL12 and PRNP.

The protein resides in the cytoplasm. In terms of biological role, potential NADPH-dependent oxidoreductase. May be involved in the regulation of neuronal survival, differentiation and axonal outgrowth. In Pongo abelii (Sumatran orangutan), this protein is Putative monooxygenase p33MONOX (P33MONOX).